Reading from the N-terminus, the 190-residue chain is Threonylcarbamoyl-AMP synthase (190 aa).

The YrdC-like domain occupies 7–190 (GDAIAAAIDV…ALTGELFRQG (184 aa)).

It belongs to the SUA5 family. TsaC subfamily.

Its subcellular location is the cytoplasm. The catalysed reaction is L-threonine + hydrogencarbonate + ATP = L-threonylcarbamoyladenylate + diphosphate + H2O. In terms of biological role, required for the formation of a threonylcarbamoyl group on adenosine at position 37 (t(6)A37) in tRNAs that read codons beginning with adenine. Catalyzes the conversion of L-threonine, HCO(3)(-)/CO(2) and ATP to give threonylcarbamoyl-AMP (TC-AMP) as the acyladenylate intermediate, with the release of diphosphate. The sequence is that of Threonylcarbamoyl-AMP synthase from Shigella dysenteriae serotype 1 (strain Sd197).